We begin with the raw amino-acid sequence, 489 residues long: Glucose-1-phosphate adenylyltransferase small subunit, chloroplastic/amyloplastic (489 aa).

The transit peptide at 1–52 (ITVPSTSSKNLQNSLAFSSSSLSGDKIQTTSFLNRRYCRISSRAPIVVSPKA) directs the protein to the chloroplast.

The protein belongs to the bacterial/plant glucose-1-phosphate adenylyltransferase family. Heterotetramer. As to expression, prominently expressed in the leaves. A lower level expression is seen in the roots.

It localises to the plastid. Its subcellular location is the chloroplast. The protein resides in the amyloplast. It carries out the reaction alpha-D-glucose 1-phosphate + ATP + H(+) = ADP-alpha-D-glucose + diphosphate. It participates in glycan biosynthesis; starch biosynthesis. With respect to regulation, activated by 3'phosphoglycerate, inhibited by orthophosphate. Allosteric regulation. Its function is as follows. This protein plays a role in synthesis of starch. It catalyzes the synthesis of the activated glycosyl donor, ADP-glucose from Glc-1-P and ATP. The polypeptide is Glucose-1-phosphate adenylyltransferase small subunit, chloroplastic/amyloplastic (AGPB1) (Beta vulgaris (Sugar beet)).